Reading from the N-terminus, the 400-residue chain is Glutamyl-tRNA reductase (400 aa).

Substrate contacts are provided by residues T45–R48, S103, E108–Q110, and Q114. The active-site Nucleophile is C46. NADP(+) is bound at residue G179–G184.

The protein belongs to the glutamyl-tRNA reductase family. In terms of assembly, homodimer.

The catalysed reaction is (S)-4-amino-5-oxopentanoate + tRNA(Glu) + NADP(+) = L-glutamyl-tRNA(Glu) + NADPH + H(+). It participates in porphyrin-containing compound metabolism; protoporphyrin-IX biosynthesis; 5-aminolevulinate from L-glutamyl-tRNA(Glu): step 1/2. In terms of biological role, catalyzes the NADPH-dependent reduction of glutamyl-tRNA(Glu) to glutamate 1-semialdehyde (GSA). In Clostridium perfringens (strain 13 / Type A), this protein is Glutamyl-tRNA reductase.